Here is a 490-residue protein sequence, read N- to C-terminus: Muscarinic acetylcholine receptor M4 (490 aa).

Topologically, residues M1–L42 are extracellular. 4 N-linked (GlcNAc...) asparagine glycosylation sites follow: N3, N15, N20, and N25. The chain crosses the membrane as a helical span at residues V43–M64. Topologically, residues L65–N78 are cytoplasmic. The helical transmembrane segment at Y79–Y99 threads the bilayer. The Extracellular portion of the chain corresponds to T100 to D116. Residues C115 and C195 are joined by a disulfide bond. Residues L117–F138 traverse the membrane as a helical segment. Topologically, residues D139–M158 are cytoplasmic. Residues A159–W181 traverse the membrane as a helical segment. Topologically, residues Q182–P203 are extracellular. Residues A204 to I226 traverse the membrane as a helical segment. At H227–T412 the chain is on the cytoplasmic side. Positions V236 to K250 are enriched in basic residues. Residues V236–W343 are disordered. Basic and acidic residues predominate over residues R270 to D285. Composition is skewed to polar residues over residues P287–Q296 and N304–T314. The chain crosses the membrane as a helical span at residues I413–I433. Topologically, residues N434–S447 are extracellular. The chain crosses the membrane as a helical span at residues I448 to C467. Residues N468–R490 lie on the Cytoplasmic side of the membrane.

Belongs to the G-protein coupled receptor 1 family. Muscarinic acetylcholine receptor subfamily. CHRM4 sub-subfamily. Expressed in heart and brain.

The protein resides in the cell membrane. Its subcellular location is the postsynaptic cell membrane. Functionally, the muscarinic acetylcholine receptor mediates various cellular responses, including inhibition of adenylate cyclase, breakdown of phosphoinositides and modulation of potassium channels through the action of G proteins. Primary transducing effect is inhibition of adenylate cyclase. May couple to multiple functional responses in cell lines. This Gallus gallus (Chicken) protein is Muscarinic acetylcholine receptor M4 (CHRM4).